We begin with the raw amino-acid sequence, 394 residues long: MTPQVLTILGSTGSIGESTLDVVSRHPEKFRVFALAGHKQVEKLAAQCQTFHPEYAVVADAEHAARLEALLKRDGTATQVLHGAQALVDVASADEVSGVMCAIVGAVGLPSALAAAQKGKTIYLANKETLVVSGALFMETARANGAAVLPVDSEHNAVFQVLPRDYAGRLNEHGIASIILTASGGPFLTADLNTFDRITPAQAVKHPNWRMGRKISVDSATMMNKGLELIEAHWLFNCPPDKLEVVIHPQSVIHSMVRYRDGSVLAQLGNPDMRTPIAYCLGLPERIDSGVGDLDFDALSALTFQKPDFDRFPCLRLAYEAMNAGGAAPCVLNAANEAAVAAFLDGQIKFTDIAKTVAHCLAQDFSDGIGDIGGLLAQDARTRAQARAFIGTLR.

Positions 12, 13, 14, 15, 39, 40, and 126 each coordinate NADPH. Lys-127 provides a ligand contact to 1-deoxy-D-xylulose 5-phosphate. Glu-128 lines the NADPH pocket. A Mn(2+)-binding site is contributed by Asp-152. Positions 153, 154, 183, and 206 each coordinate 1-deoxy-D-xylulose 5-phosphate. Glu-154 is a binding site for Mn(2+). Gly-212 is an NADPH binding site. Residues Ser-219, Asn-224, Lys-225, and Glu-228 each contribute to the 1-deoxy-D-xylulose 5-phosphate site. Glu-228 lines the Mn(2+) pocket.

It belongs to the DXR family. The cofactor is Mg(2+). It depends on Mn(2+) as a cofactor.

It catalyses the reaction 2-C-methyl-D-erythritol 4-phosphate + NADP(+) = 1-deoxy-D-xylulose 5-phosphate + NADPH + H(+). It functions in the pathway isoprenoid biosynthesis; isopentenyl diphosphate biosynthesis via DXP pathway; isopentenyl diphosphate from 1-deoxy-D-xylulose 5-phosphate: step 1/6. Functionally, catalyzes the NADPH-dependent rearrangement and reduction of 1-deoxy-D-xylulose-5-phosphate (DXP) to 2-C-methyl-D-erythritol 4-phosphate (MEP). This chain is 1-deoxy-D-xylulose 5-phosphate reductoisomerase, found in Neisseria meningitidis serogroup B (strain ATCC BAA-335 / MC58).